We begin with the raw amino-acid sequence, 353 residues long: Photosystem II protein D1 (353 aa).

N-acetylthreonine is present on T2. A Phosphothreonine modification is found at T2. 3 helical membrane passes run 29 to 46 (YIGWFGVLMIPTLLTATS), 118 to 133 (HFLLGVACYMGREWEL), and 142 to 156 (WIAVAYSAPVAAATA). H118 lines the chlorophyll a pocket. Residue Y126 participates in pheophytin a binding. [CaMn4O5] cluster-binding residues include D170 and E189. A helical membrane pass occupies residues 197-218 (FHMLGVAGVFGGSLFSAMHGSL). H198 serves as a coordination point for chlorophyll a. Residues H215 and 264–265 (SF) each bind a quinone. A Fe cation-binding site is contributed by H215. A Fe cation-binding site is contributed by H272. The chain crosses the membrane as a helical span at residues 274–288 (FLAAWPVVGIWFTAL). [CaMn4O5] cluster contacts are provided by H332, E333, D342, and A344. The propeptide occupies 345 to 353 (SIEAPLVNG).

Belongs to the reaction center PufL/M/PsbA/D family. As to quaternary structure, PSII is composed of 1 copy each of membrane proteins PsbA, PsbB, PsbC, PsbD, PsbE, PsbF, PsbH, PsbI, PsbJ, PsbK, PsbL, PsbM, PsbT, PsbX, PsbY, PsbZ, Psb30/Ycf12, at least 3 peripheral proteins of the oxygen-evolving complex and a large number of cofactors. It forms dimeric complexes. It depends on The D1/D2 heterodimer binds P680, chlorophylls that are the primary electron donor of PSII, and subsequent electron acceptors. It shares a non-heme iron and each subunit binds pheophytin, quinone, additional chlorophylls, carotenoids and lipids. D1 provides most of the ligands for the Mn4-Ca-O5 cluster of the oxygen-evolving complex (OEC). There is also a Cl(-1) ion associated with D1 and D2, which is required for oxygen evolution. The PSII complex binds additional chlorophylls, carotenoids and specific lipids. as a cofactor. Tyr-161 forms a radical intermediate that is referred to as redox-active TyrZ, YZ or Y-Z. In terms of processing, C-terminally processed by CTPA; processing is essential to allow assembly of the oxygen-evolving complex and thus photosynthetic growth.

It localises to the plastid. The protein localises to the chloroplast thylakoid membrane. The catalysed reaction is 2 a plastoquinone + 4 hnu + 2 H2O = 2 a plastoquinol + O2. Functionally, photosystem II (PSII) is a light-driven water:plastoquinone oxidoreductase that uses light energy to abstract electrons from H(2)O, generating O(2) and a proton gradient subsequently used for ATP formation. It consists of a core antenna complex that captures photons, and an electron transfer chain that converts photonic excitation into a charge separation. The D1/D2 (PsbA/PsbD) reaction center heterodimer binds P680, the primary electron donor of PSII as well as several subsequent electron acceptors. In Psilotum nudum (Whisk fern), this protein is Photosystem II protein D1.